The primary structure comprises 96 residues: Large ribosomal subunit protein eL21 (96 aa).

The interval 1–22 (MRKSKGFKSRSRYKLKRSIRPK) is disordered.

It belongs to the eukaryotic ribosomal protein eL21 family.

The chain is Large ribosomal subunit protein eL21 from Methanosphaera stadtmanae (strain ATCC 43021 / DSM 3091 / JCM 11832 / MCB-3).